A 92-amino-acid polypeptide reads, in one-letter code: MLTIIRTLMAIDWLKIFCLRKSPKDEDQAHPMLDILPQTLDSVKKSSSRFPRKMLAATISILEEEVTELVTELNNTTNLTAKKECPRITNAL.

Residues 53 to 82 adopt a coiled-coil conformation; that stretch reads KMLAATISILEEEVTELVTELNNTTNLTAK.

This Rice dwarf virus (isolate Fujian) (RDV) protein is Protein OP-ORF.